The sequence spans 198 residues: Superoxide dismutase [Mn], mitochondrial (198 aa).

Position 26 (H26) interacts with Mn(2+). Y34 carries the post-translational modification 3'-nitrotyrosine. N6-acetyllysine; alternate is present on residues K44 and K51. N6-succinyllysine; alternate occurs at positions 44 and 51. H74 is a Mn(2+) binding site. At K90 the chain carries N6-acetyllysine. N6-acetyllysine; alternate occurs at positions 98 and 106. Residues K98 and K106 each carry the N6-succinyllysine; alternate modification. 2 residues coordinate Mn(2+): D159 and H163. An N6-acetyllysine modification is found at K178.

The protein belongs to the iron/manganese superoxide dismutase family. In terms of assembly, homotetramer. Requires Mn(2+) as cofactor. Nitrated under oxidative stress. Nitration coupled with oxidation inhibits the catalytic activity. In terms of processing, acetylation at Lys-98 decreases enzymatic activity. Deacetylated by SIRT3 upon exposure to ionizing radiations or after long fasting. Post-translationally, polyubiquitinated; leading to proteasomal degradation. Deubiquitinated by USP36 which increases protein stability.

The protein resides in the mitochondrion matrix. It carries out the reaction 2 superoxide + 2 H(+) = H2O2 + O2. In terms of biological role, destroys superoxide anion radicals which are normally produced within the cells and which are toxic to biological systems. This Macaca fuscata fuscata (Japanese macaque) protein is Superoxide dismutase [Mn], mitochondrial (SOD2).